The following is a 63-amino-acid chain: uncharacterized protein (63 aa).

Positions 1-17 (MRYTDSRKLTPETDANH) are enriched in basic and acidic residues. Positions 1-32 (MRYTDSRKLTPETDANHKTASPQPIRRISSQT) are disordered. Polar residues predominate over residues 18–32 (KTASPQPIRRISSQT).

The protein to Y.enterocolitica HemP.

This is an uncharacterized protein from Escherichia coli (strain K12).